Consider the following 391-residue polypeptide: Na(+)/H(+) antiporter NhaA (391 aa).

11 helical membrane-spanning segments follow: residues 14-34 (AGGI…NSPL), 59-79 (LIHW…GLEV), 95-115 (SLPT…YLIF), 124-144 (VGWA…MALL), 154-174 (VFLL…IALF), 177-197 (TDLS…LIGL), 213-233 (LILW…GVII), 261-281 (FIIL…GMSL), 292-312 (IALG…YIAV), 331-351 (VAVM…LAFV), and 363-383 (LGIL…LSKV).

It belongs to the NhaA Na(+)/H(+) (TC 2.A.33) antiporter family.

The protein localises to the cell inner membrane. It carries out the reaction Na(+)(in) + 2 H(+)(out) = Na(+)(out) + 2 H(+)(in). Functionally, na(+)/H(+) antiporter that extrudes sodium in exchange for external protons. The polypeptide is Na(+)/H(+) antiporter NhaA (Shewanella pealeana (strain ATCC 700345 / ANG-SQ1)).